We begin with the raw amino-acid sequence, 1140 residues long: Protein shank (1140 aa).

6 ANK repeats span residues 144–174 (QGETPLTLAAGIPNNRAVIVSLIGGGAHVDF), 178–207 (EGQTAMHKAAFLSSFENVKTLIELGASPNY), 211–242 (IGLTPLYYNMLTADSNDQVAEILLREAADIGV), 246–275 (HGNHEIHQACKNGLTKHVEHLLYFGGQIDA), 279–309 (NGNSPLHVCAVNNRPECARVLLFRGADHLAV), and 312–341 (QGQTALHVSHIVGNPGVADVVQAHNPKSSV). Residues 337–412 (PKSSVPYRGT…ITPSEYGTMR (76 aa)) are disordered. Residues 351–364 (TRRRLSSTITRRRS) show a composition bias toward basic residues. A compositionally biased stretch (low complexity) spans 388–412 (SAAPSPSPSRSSRTTITPSEYGTMR). The 94-residue stretch at 436–529 (ILVIPRGVKG…TITLKVITVD (94 aa)) folds into the PDZ domain. 2 stretches are compositionally biased toward polar residues: residues 640–657 (DQESLNGGYSSKKYNSVS) and 687–704 (TSTFEYNCSSRSTPQLSR). Disordered regions lie at residues 640–673 (DQESLNGGYSSKKYNSVSDMKRRKGQRNVVASSA), 687–856 (TSTF…AASA), 875–902 (QLKKAEPRETSAASVSNNNNNNNNSTTD), 961–993 (KDSGYTSSRTSLEPSESEEKDHRPHFSLDHSPN), and 1008–1028 (YGQKDNMSVASSSTASSSSTV). Composition is skewed to low complexity over residues 761 to 775 (QHQNHQNHQYQQQHP) and 784 to 793 (PQPIQQQQSS). Pro residues-rich tracts occupy residues 794–806 (IPPPPPPPPPPHC) and 823–847 (VPPPPPPLPPISSGAPPPPPPPPPG). A compositionally biased stretch (polar residues) spans 964-974 (GYTSSRTSLEP). Basic and acidic residues predominate over residues 977–988 (SEEKDHRPHFSL). Residues 1015 to 1028 (SVASSSTASSSSTV) are compositionally biased toward low complexity. The region spanning 1078–1140 (WSVDDVIGWL…IESALRGLLQ (63 aa)) is the SAM domain.

This sequence belongs to the SHANK family. In terms of assembly, interacts (via PDZ domain) with egl-19 (via C-terminus). Expressed in the pharynx, pharyngeal-intestinal valve, intestine, rectal epithelial cells, tail neurons, nerve cord and sperm.

It is found in the cell projection. The protein resides in the pseudopodium. Its subcellular location is the cytoplasmic vesicle. It localises to the postsynaptic density. Its function is as follows. Scaffold protein that most likely acts in the postsynaptic density (PSD) of excitatory synapses which orchestrates synapse formation and maintenance at neuromuscular junctions. Associates with and trafficks the L-type calcium channel egl-19 to the cell surface of body wall muscles to ensure the function of the calcium channel and therefore maintain the Ca(2+) current density. The maintenance of Ca(2+) also allows for the downstream regulation of Ca(2+)-induced expression of genes such as gem-4. Plays a role in the regulation of the defecation cycle, and this may be in association with the inositol trisphosphate (IP3) receptor itr-1, which in turn mediates periodic calcium release and muscle contractions. Required for normal fertility and pharyngeal pumping. In Caenorhabditis elegans, this protein is Protein shank.